Reading from the N-terminus, the 402-residue chain is Calcium-responsive transactivator (402 aa).

The tract at residues 1–148 (MSVAFASARP…TLPTTSMSMS (148 aa)) is N-terminal auto-inhibitory domain; necessary for interaction with SMARCA4/BRG1. Positions 50–53 (YQQI) match the SH2-binding motif. Disordered stretches follow at residues 72-129 (QSLL…GPNH), 141-170 (PTTSMSMSGSGHGSGPGYSHSGPASQSVPL), 195-250 (MHQQ…SSQQ), 262-290 (QYGHGQAASEPMSQQYYPDGHGDYAYQPA), and 305-402 (TQHY…NYQQ). Residues 92–106 (QSGSAQGLHSQGSLS) are compositionally biased toward low complexity. The segment covering 117-129 (SLMQAQIGNGPNH) has biased composition (polar residues). Residues 149 to 237 (GSGHGSGPGY…GGGVMGQRPM (89 aa)) are methionine-rich intra-molecular domain. Over residues 196–224 (HQQAASSHYSAAQGGSQHYQGQSMAMMGQ) the composition is skewed to low complexity. The interval 251–323 (YLGQEEYYGG…SQYSQQQTGY (73 aa)) is MFD domain. Low complexity-rich tracts occupy residues 311-379 (GGNS…RASQ) and 390-402 (YGYEQGQYGNYQQ). The interval 340–402 (NQQSYPGQQQ…EQGQYGNYQQ (63 aa)) is necessary for nuclear localization. Residues 359 to 362 (SQYS) carry the SH2-binding motif. The short motif at 377–385 (ASQTGPSTQ) is the SH3-binding element. The necessary for interaction with CREBBP and for the recruitment of CREBBP to the nuclear bodies stretch occupies residues 393–402 (EQGQYGNYQQ). The short motif at 397-400 (YGNY) is the SH2-binding element.

It belongs to the SS18 family. As to quaternary structure, homodimer. Dimerization may be necessary for its function in neuronal dendritic development. Interacts (via C-terminus) with CREBBP (via N-terminus), EP300 and SMARCA4/BRG1. Interacts with the nBAF complex. Association with CREBBP facilitates transcription while the association with SMARCA4/BRG1 suppresses CREST-mediated transcription in resting neurons.

It is found in the nucleus. The protein localises to the chromosome. Its subcellular location is the centromere. It localises to the kinetochore. Its function is as follows. Transcriptional activator which is required for calcium-dependent dendritic growth and branching in cortical neurons. Recruits CREB-binding protein (CREBBP) to nuclear bodies. Component of the CREST-BRG1 complex, a multiprotein complex that regulates promoter activation by orchestrating a calcium-dependent release of a repressor complex and a recruitment of an activator complex. In resting neurons, transcription of the c-FOS promoter is inhibited by BRG1-dependent recruitment of a phospho-RB1-HDAC1 repressor complex. Upon calcium influx, RB1 is dephosphorylated by calcineurin, which leads to release of the repressor complex. At the same time, there is increased recruitment of CREBBP to the promoter by a CREST-dependent mechanism, which leads to transcriptional activation. The CREST-BRG1 complex also binds to the NR2B promoter, and activity-dependent induction of NR2B expression involves a release of HDAC1 and recruitment of CREBBP. In Bos taurus (Bovine), this protein is Calcium-responsive transactivator (SS18L1).